Consider the following 198-residue polypeptide: UPF0314 protein Atu8092 (198 aa).

The next 3 membrane-spanning stretches (helical) occupy residues Leu-14–Met-34, Trp-64–Phe-84, and Val-150–Ile-170.

Belongs to the UPF0314 family.

It localises to the cell membrane. The protein is UPF0314 protein Atu8092 of Agrobacterium fabrum (strain C58 / ATCC 33970) (Agrobacterium tumefaciens (strain C58)).